Consider the following 492-residue polypeptide: Cytochrome P450 26A1 (492 aa).

Residue C437 participates in heme binding.

Belongs to the cytochrome P450 family. Heme is required as a cofactor.

The protein resides in the endoplasmic reticulum membrane. It localises to the microsome membrane. The enzyme catalyses all-trans-retinoate + reduced [NADPH--hemoprotein reductase] + O2 = all-trans-(4S)-hydroxyretinoate + oxidized [NADPH--hemoprotein reductase] + H2O + H(+). It catalyses the reaction all-trans-(4S)-hydroxyretinoate + reduced [NADPH--hemoprotein reductase] + O2 = all-trans-(4S,16)-dihydroxyretinoate + oxidized [NADPH--hemoprotein reductase] + H2O + H(+). It carries out the reaction all-trans-retinoate + reduced [NADPH--hemoprotein reductase] + O2 = all-trans-18-hydroxyretinoate + oxidized [NADPH--hemoprotein reductase] + H2O + H(+). In terms of biological role, a cytochrome P450 monooxygenase involved in the metabolism of retinoates (RAs), the active metabolites of vitamin A, and critical signaling molecules in animals. RAs exist as at least four different isomers: all-trans-RA (atRA), 9-cis-RA, 13-cis-RA, and 9,13-dicis-RA, where atRA is considered to be the biologically active isomer, although 9-cis-RA and 13-cis-RA also have activity. Catalyzes the hydroxylation of atRA primarily at C-4 and C-18, thereby contributing to the regulation of atRA homeostasis and signaling. Hydroxylation of atRA limits its biological activity and initiates a degradative process leading to its eventual elimination. Involved in the convertion of atRA to all-trans-4-oxo-RA. Able to metabolize other RAs such as 9-cis, 13-cis and 9,13-di-cis RA. Can oxidize all-trans-13,14-dihydroretinoate (DRA) to metabolites which could include all-trans-4-oxo-DRA, all-trans-4-hydroxy-DRA, all-trans-5,8-epoxy-DRA, and all-trans-18-hydroxy-DRA. May play a role in the oxidative metabolism of xenobiotics such as tazarotenic acid. In Gallus gallus (Chicken), this protein is Cytochrome P450 26A1 (CYP26A1).